A 109-amino-acid chain; its full sequence is uncharacterized protein (109 aa).

This sequence to E.coli YtfG C-terminal region.

This is an uncharacterized protein from Haemophilus influenzae (strain ATCC 51907 / DSM 11121 / KW20 / Rd).